A 280-amino-acid polypeptide reads, in one-letter code: Myelin proteolipid protein B (280 aa).

The Cytoplasmic portion of the chain corresponds to 1 to 10; sequence MGWHDGCIRC. S-palmitoyl cysteine attachment occurs at residues C7 and C10. The helical transmembrane segment at 11-36 threads the bilayer; that stretch reads MVGVPFASVIATVLCFAGVALFCGCG. Over 37–59 the chain is Extracellular; that stretch reads HEALSGTEKLIETYFSKNYQEYE. A helical membrane pass occupies residues 60 to 88; sequence YLIHVINAFQYVIYGIAIFFFLYGILLLA. At 89 to 152 the chain is on the cytoplasmic side; the sequence is EGFYTTTAIK…LGKWLGHPDK (64 aa). Residues C140 and C142 are each lipidated (S-palmitoyl cysteine). The chain crosses the membrane as a helical span at residues 153–179; that stretch reads FVGVTYVITILWILIFACSAVPVYIYF. The Extracellular portion of the chain corresponds to 180 to 239; sequence NTWVTCQSIAFPGKTTTSVSTLCLDARMYGVLPWNAFPGKVCGTSLLAICKTSEFQMTFH. Intrachain disulfides connect C185-C229 and C202-C221. The helical transmembrane segment at 240–269 threads the bilayer; sequence LFIAAFVGAAATLVALLTYMVGASFNYAVL. At 270–280 the chain is on the cytoplasmic side; the sequence is RVTGRSDRSKF.

The protein belongs to the myelin proteolipid protein family.

The protein resides in the cell membrane. Functionally, this is the major myelin protein from the central nervous system. It plays an important role in the formation or maintenance of the multilamellar structure of myelin. This Xenopus laevis (African clawed frog) protein is Myelin proteolipid protein B (plp1-b).